Here is a 174-residue protein sequence, read N- to C-terminus: Gamma-crystallin C (174 aa).

2 Beta/gamma crystallin 'Greek key' domains span residues 2-40 and 41-83; these read GKIT…RVES and GCWM…CLIP. Cys-23 is modified (S-methylcysteine). The segment at 84-87 is connecting peptide; it reads QTGS. 2 consecutive Beta/gamma crystallin 'Greek key' domains span residues 88–128 and 129–171; these read HRLR…HVLE and GCWV…RRVV.

This sequence belongs to the beta/gamma-crystallin family. In terms of assembly, monomer.

Its function is as follows. Crystallins are the dominant structural components of the vertebrate eye lens. The chain is Gamma-crystallin C (CRYGC) from Macaca mulatta (Rhesus macaque).